A 306-amino-acid chain; its full sequence is MTQTLPTPRGSLTPNRTLADLTWLRVGGPADWLFQPADEADLAAFLAALDPAIPVFPMGVGSNLIVRDGGIRGVVIRLGRGFNAIACEGGTVTAGAAALDAHVARRAAEAGLDLTFLRTIPGSIGGAVRMNAGCYGTYVADHLVSVRAVARDGSLHEIAAADLRFGYRHSDLPEGWVVIEARFRAEPGDPAELAARMEEQLARRDASQPTKDRSAGSTFRNPAGYSSTGRADDSHELKAWTLIDAAGLRGHRLGGAQMSEKHPNFLLNAGGATAAELEALGELVRRKVRETSGHELKWEVIRVGRP.

An FAD-binding PCMH-type domain is found at 25 to 188 (RVGGPADWLF…IEARFRAEPG (164 aa)). Arginine 168 is a catalytic residue. Residues 199–214 (EQLARRDASQPTKDRS) are compositionally biased toward basic and acidic residues. Residues 199 to 232 (EQLARRDASQPTKDRSAGSTFRNPAGYSSTGRAD) form a disordered region. Positions 215–229 (AGSTFRNPAGYSSTG) are enriched in polar residues. Serine 217 serves as the catalytic Proton donor. Glutamate 299 is a catalytic residue.

The protein belongs to the MurB family. Requires FAD as cofactor.

Its subcellular location is the cytoplasm. It catalyses the reaction UDP-N-acetyl-alpha-D-muramate + NADP(+) = UDP-N-acetyl-3-O-(1-carboxyvinyl)-alpha-D-glucosamine + NADPH + H(+). The protein operates within cell wall biogenesis; peptidoglycan biosynthesis. Its function is as follows. Cell wall formation. This chain is UDP-N-acetylenolpyruvoylglucosamine reductase, found in Paracoccus denitrificans (strain Pd 1222).